Consider the following 308-residue polypeptide: RING-H2 finger protein ATL63 (308 aa).

A helical transmembrane segment spans residues 29-49; sequence VLLAALVFLLLVVLFVLLLHF. The RING-type; atypical zinc finger occupies 138–180; that stretch reads CVICLGLWEAGDFGRKLRNCGHGFHVECIDMWLSSHSTCPLCR. The interval 252–308 is disordered; that stretch reads VFDDDEEINDGGTRSDRRRSMSMTSSASSSLMRMLSSSSSRSERNKVFPTARQDSSK. A compositionally biased stretch (low complexity) spans 272–291; that stretch reads MSMTSSASSSLMRMLSSSSS.

This sequence belongs to the RING-type zinc finger family. ATL subfamily.

It localises to the membrane. The catalysed reaction is S-ubiquitinyl-[E2 ubiquitin-conjugating enzyme]-L-cysteine + [acceptor protein]-L-lysine = [E2 ubiquitin-conjugating enzyme]-L-cysteine + N(6)-ubiquitinyl-[acceptor protein]-L-lysine.. The protein operates within protein modification; protein ubiquitination. The polypeptide is RING-H2 finger protein ATL63 (ATL63) (Arabidopsis thaliana (Mouse-ear cress)).